A 146-amino-acid polypeptide reads, in one-letter code: Large ribosomal subunit protein uL15 (146 aa).

Positions methionine 1–glycine 54 are disordered. Residues arginine 23 to valine 37 are compositionally biased toward gly residues.

It belongs to the universal ribosomal protein uL15 family. Part of the 50S ribosomal subunit.

Its function is as follows. Binds to the 23S rRNA. The protein is Large ribosomal subunit protein uL15 of Acinetobacter baylyi (strain ATCC 33305 / BD413 / ADP1).